The sequence spans 477 residues: Argininosuccinate lyase (477 aa).

It belongs to the lyase 1 family. Argininosuccinate lyase subfamily.

The protein resides in the cytoplasm. It carries out the reaction 2-(N(omega)-L-arginino)succinate = fumarate + L-arginine. It functions in the pathway amino-acid biosynthesis; L-arginine biosynthesis; L-arginine from L-ornithine and carbamoyl phosphate: step 3/3. The chain is Argininosuccinate lyase from Acinetobacter baumannii (strain ACICU).